Reading from the N-terminus, the 369-residue chain is N-succinylamino acid racemase (369 aa).

The Proton donor role is filled by K163. Residues D188, E213, and D238 each coordinate Mg(2+). The active-site Proton acceptor is K262.

It belongs to the mandelate racemase/muconate lactonizing enzyme family. MenC type 2 subfamily. Homooctamer. Tetramer of dimers. The cofactor is a divalent metal cation.

The catalysed reaction is (1R,6R)-6-hydroxy-2-succinyl-cyclohexa-2,4-diene-1-carboxylate = 2-succinylbenzoate + H2O. Its function is as follows. Acts as a N-succinylamino acid racemase (NSAR) that catalyzes the racemization of N-succinyl-L-phenylglycine. Also converts 2-succinyl-6-hydroxy-2,4-cyclohexadiene-1-carboxylate (SHCHC) to 2-succinylbenzoate (OSB). Catalyzes both N-succinylamino acid racemization and OSB synthesis at equivalent rates. However, NSAR activity is probably the protein's biological function, because menaquinone biosynthesis genes are missing in this species. This Thermus thermophilus (strain ATCC 27634 / DSM 579 / HB8) protein is N-succinylamino acid racemase.